The following is a 483-amino-acid chain: Glutamate--tRNA ligase (483 aa).

The 'HIGH' region signature appears at 11–21; sequence PSPTGHLHIGN. A 'KMSKS' region motif is present at residues 252-256; it reads KLSKR. Lysine 255 provides a ligand contact to ATP.

The protein belongs to the class-I aminoacyl-tRNA synthetase family. Glutamate--tRNA ligase type 1 subfamily. Monomer.

It localises to the cytoplasm. It catalyses the reaction tRNA(Glu) + L-glutamate + ATP = L-glutamyl-tRNA(Glu) + AMP + diphosphate. Functionally, catalyzes the attachment of glutamate to tRNA(Glu) in a two-step reaction: glutamate is first activated by ATP to form Glu-AMP and then transferred to the acceptor end of tRNA(Glu). This chain is Glutamate--tRNA ligase, found in Bacillus velezensis (strain DSM 23117 / BGSC 10A6 / LMG 26770 / FZB42) (Bacillus amyloliquefaciens subsp. plantarum).